We begin with the raw amino-acid sequence, 256 residues long: 5'-nucleotidase SurE (256 aa).

Positions 9, 10, 40, and 94 each coordinate a divalent metal cation.

It belongs to the SurE nucleotidase family. It depends on a divalent metal cation as a cofactor.

The protein localises to the cytoplasm. It catalyses the reaction a ribonucleoside 5'-phosphate + H2O = a ribonucleoside + phosphate. In terms of biological role, nucleotidase that shows phosphatase activity on nucleoside 5'-monophosphates. This is 5'-nucleotidase SurE from Campylobacter fetus subsp. fetus (strain 82-40).